The chain runs to 387 residues: Ferrochelatase (387 aa).

His-196 and Glu-277 together coordinate Fe cation.

Belongs to the ferrochelatase family.

The protein resides in the cytoplasm. The enzyme catalyses heme b + 2 H(+) = protoporphyrin IX + Fe(2+). The protein operates within porphyrin-containing compound metabolism; protoheme biosynthesis; protoheme from protoporphyrin-IX: step 1/1. Functionally, catalyzes the ferrous insertion into protoporphyrin IX. The chain is Ferrochelatase from Gloeothece citriformis (strain PCC 7424) (Cyanothece sp. (strain PCC 7424)).